Consider the following 227-residue polypeptide: Cytochrome c oxidase subunit 2 (227 aa).

Topologically, residues 1–14 are mitochondrial intermembrane; sequence MAHAAQVGLQDATS. Residues 15-45 traverse the membrane as a helical segment; sequence PIMEELIIFHDHALMIIFLICFLVLYALFLT. The Mitochondrial matrix segment spans residues 46–59; sequence LTTKLTSTNISDAQ. Residues 60-87 form a helical membrane-spanning segment; the sequence is EMETVWTILPAIILVLIALPSLRILYMT. Residues 88-227 lie on the Mitochondrial intermembrane side of the membrane; the sequence is DEINDPSFTI…IFEMGPVFTL (140 aa). His161, Cys196, Glu198, Cys200, His204, and Met207 together coordinate Cu cation. Residue Glu198 coordinates Mg(2+).

It belongs to the cytochrome c oxidase subunit 2 family. Component of the cytochrome c oxidase (complex IV, CIV), a multisubunit enzyme composed of 14 subunits. The complex is composed of a catalytic core of 3 subunits MT-CO1, MT-CO2 and MT-CO3, encoded in the mitochondrial DNA, and 11 supernumerary subunits COX4I, COX5A, COX5B, COX6A, COX6B, COX6C, COX7A, COX7B, COX7C, COX8 and NDUFA4, which are encoded in the nuclear genome. The complex exists as a monomer or a dimer and forms supercomplexes (SCs) in the inner mitochondrial membrane with NADH-ubiquinone oxidoreductase (complex I, CI) and ubiquinol-cytochrome c oxidoreductase (cytochrome b-c1 complex, complex III, CIII), resulting in different assemblies (supercomplex SCI(1)III(2)IV(1) and megacomplex MCI(2)III(2)IV(2)). Found in a complex with TMEM177, COA6, COX18, COX20, SCO1 and SCO2. Interacts with TMEM177 in a COX20-dependent manner. Interacts with COX20. Interacts with COX16. It depends on Cu cation as a cofactor.

Its subcellular location is the mitochondrion inner membrane. It catalyses the reaction 4 Fe(II)-[cytochrome c] + O2 + 8 H(+)(in) = 4 Fe(III)-[cytochrome c] + 2 H2O + 4 H(+)(out). Its function is as follows. Component of the cytochrome c oxidase, the last enzyme in the mitochondrial electron transport chain which drives oxidative phosphorylation. The respiratory chain contains 3 multisubunit complexes succinate dehydrogenase (complex II, CII), ubiquinol-cytochrome c oxidoreductase (cytochrome b-c1 complex, complex III, CIII) and cytochrome c oxidase (complex IV, CIV), that cooperate to transfer electrons derived from NADH and succinate to molecular oxygen, creating an electrochemical gradient over the inner membrane that drives transmembrane transport and the ATP synthase. Cytochrome c oxidase is the component of the respiratory chain that catalyzes the reduction of oxygen to water. Electrons originating from reduced cytochrome c in the intermembrane space (IMS) are transferred via the dinuclear copper A center (CU(A)) of subunit 2 and heme A of subunit 1 to the active site in subunit 1, a binuclear center (BNC) formed by heme A3 and copper B (CU(B)). The BNC reduces molecular oxygen to 2 water molecules using 4 electrons from cytochrome c in the IMS and 4 protons from the mitochondrial matrix. The protein is Cytochrome c oxidase subunit 2 (MT-CO2) of Gorilla gorilla beringei (Mountain gorilla).